Reading from the N-terminus, the 398-residue chain is MNIHEYQAKALLKSYGAPVAEGVAIFSADEAEAAAKKLPGPLYVVKSQIHAGGRGKGKFKELGPDAKGGVRLAKSVDEVVANAKDMLGNTLVTKQTGPAGKQVNRLYIEDGADIDRELYLSILVDRSVGQVAFVVSTEGGMDIEAVAEHTPEKIVTVAIDPEKGVTAENLKTLADALKLEGEARADAEKLFPILYKAFVEKDMSLLEVNPLIVMTNGRMRVLDAKVSFDGNALFRHEDVVALRDTTEEDDKEIEASKYDLAYVALDGNIGCMVNGAGLAMATMDIIKLYGAEPANFLDVGGGASKEKVTQAFKIITADPAVKGILVNIFGGIMKCDVIAEGVLAAVKEVGLKVPLVVRLEGTNVELGKKIINESGLNVISADDLDDAAQKIVAAVKGA.

Positions 9–254 (KALLKSYGAP…TTEEDDKEIE (246 aa)) constitute an ATP-grasp domain. ATP-binding positions include Lys-46, 53-55 (GRG), Glu-109, Ala-112, and Glu-117. Mg(2+) is bound by residues Asn-209 and Asp-223. Substrate contacts are provided by residues Asn-274 and 331 to 333 (GIM).

This sequence belongs to the succinate/malate CoA ligase beta subunit family. As to quaternary structure, heterotetramer of two alpha and two beta subunits. It depends on Mg(2+) as a cofactor.

It catalyses the reaction succinate + ATP + CoA = succinyl-CoA + ADP + phosphate. The catalysed reaction is GTP + succinate + CoA = succinyl-CoA + GDP + phosphate. The protein operates within carbohydrate metabolism; tricarboxylic acid cycle; succinate from succinyl-CoA (ligase route): step 1/1. Functionally, succinyl-CoA synthetase functions in the citric acid cycle (TCA), coupling the hydrolysis of succinyl-CoA to the synthesis of either ATP or GTP and thus represents the only step of substrate-level phosphorylation in the TCA. The beta subunit provides nucleotide specificity of the enzyme and binds the substrate succinate, while the binding sites for coenzyme A and phosphate are found in the alpha subunit. This chain is Succinate--CoA ligase [ADP-forming] subunit beta, found in Rhizobium meliloti (strain 1021) (Ensifer meliloti).